Here is a 166-residue protein sequence, read N- to C-terminus: Ribosome-binding factor A (166 aa).

The segment at 122–166 (LASTAEHAGDADPYRVDTEDDDDDTDGADAEARSDADVRRGPQSG) is disordered. Residues 128–138 (HAGDADPYRVD) are compositionally biased toward basic and acidic residues. The segment covering 139-150 (TEDDDDDTDGAD) has biased composition (acidic residues). Residues 151-166 (AEARSDADVRRGPQSG) are compositionally biased toward basic and acidic residues.

The protein belongs to the RbfA family. In terms of assembly, monomer. Binds 30S ribosomal subunits, but not 50S ribosomal subunits or 70S ribosomes.

It is found in the cytoplasm. In terms of biological role, one of several proteins that assist in the late maturation steps of the functional core of the 30S ribosomal subunit. Associates with free 30S ribosomal subunits (but not with 30S subunits that are part of 70S ribosomes or polysomes). Required for efficient processing of 16S rRNA. May interact with the 5'-terminal helix region of 16S rRNA. The polypeptide is Ribosome-binding factor A (Saccharopolyspora erythraea (strain ATCC 11635 / DSM 40517 / JCM 4748 / NBRC 13426 / NCIMB 8594 / NRRL 2338)).